A 276-amino-acid polypeptide reads, in one-letter code: Putative pyruvate, phosphate dikinase regulatory protein 2 (276 aa).

146–153 serves as a coordination point for ADP; that stretch reads GVSRTSKT.

The protein belongs to the pyruvate, phosphate/water dikinase regulatory protein family. PDRP subfamily.

It carries out the reaction N(tele)-phospho-L-histidyl/L-threonyl-[pyruvate, phosphate dikinase] + ADP = N(tele)-phospho-L-histidyl/O-phospho-L-threonyl-[pyruvate, phosphate dikinase] + AMP + H(+). It catalyses the reaction N(tele)-phospho-L-histidyl/O-phospho-L-threonyl-[pyruvate, phosphate dikinase] + phosphate + H(+) = N(tele)-phospho-L-histidyl/L-threonyl-[pyruvate, phosphate dikinase] + diphosphate. In terms of biological role, bifunctional serine/threonine kinase and phosphorylase involved in the regulation of the pyruvate, phosphate dikinase (PPDK) by catalyzing its phosphorylation/dephosphorylation. The sequence is that of Putative pyruvate, phosphate dikinase regulatory protein 2 from Enterococcus faecalis (strain ATCC 700802 / V583).